We begin with the raw amino-acid sequence, 945 residues long: Isoleucine--tRNA ligase (945 aa).

The short motif at 66-76 (PYANGDIHLGH) is the 'HIGH' region element. Glu581 lines the L-isoleucyl-5'-AMP pocket. The 'KMSKS' region signature appears at 622 to 626 (KMSKS). Lys625 contacts ATP. Cys908, Cys911, Cys928, and Cys931 together coordinate Zn(2+).

The protein belongs to the class-I aminoacyl-tRNA synthetase family. IleS type 1 subfamily. Monomer. Zn(2+) is required as a cofactor.

The protein resides in the cytoplasm. The enzyme catalyses tRNA(Ile) + L-isoleucine + ATP = L-isoleucyl-tRNA(Ile) + AMP + diphosphate. Functionally, catalyzes the attachment of isoleucine to tRNA(Ile). As IleRS can inadvertently accommodate and process structurally similar amino acids such as valine, to avoid such errors it has two additional distinct tRNA(Ile)-dependent editing activities. One activity is designated as 'pretransfer' editing and involves the hydrolysis of activated Val-AMP. The other activity is designated 'posttransfer' editing and involves deacylation of mischarged Val-tRNA(Ile). In Paraburkholderia xenovorans (strain LB400), this protein is Isoleucine--tRNA ligase.